We begin with the raw amino-acid sequence, 214 residues long: Transmembrane emp24 domain-containing protein p24delta9 (214 aa).

A signal peptide spans 1–24 (MFLRSLNLCTILLFLAISSQVSQS). Residues 25–181 (LHFELQSGRT…QNLNRATNSK (157 aa)) lie on the Lumenal side of the membrane. The GOLD domain maps to 34–149 (TKCISEDIKS…VEVMEFDVKR (116 aa)). Positions 164 to 177 (LREREEEMQNLNRA) form a coiled coil. Arg-167 is modified (omega-N-methylated arginine). The chain crosses the membrane as a helical span at residues 182–202 (MAWLSFLSLFVCLGVAGMQFV). At 203 to 214 (HLKTFFEKKKVI) the chain is on the cytoplasmic side. A COPII vesicle coat-binding motif is present at residues 207-208 (FF). The COPI vesicle coat-binding motif lies at 207–214 (FFEKKKVI).

It belongs to the EMP24/GP25L family. As to quaternary structure, probably oligomerizes with other members of the EMP24/GP25L family. Associates with the COPI vesicle coat (coatomer). Associates with the COPII vesicle coat (coatomer).

Its subcellular location is the endoplasmic reticulum membrane. The protein resides in the golgi apparatus. It localises to the cis-Golgi network membrane. It is found in the golgi stack membrane. Its function is as follows. Involved in vesicular protein trafficking. Mainly functions in the early secretory pathway. Thought to act as cargo receptor at the lumenal side for incorporation of secretory cargo molecules into transport vesicles and to be involved in vesicle coat formation at the cytoplasmic side. This is Transmembrane emp24 domain-containing protein p24delta9 from Arabidopsis thaliana (Mouse-ear cress).